The chain runs to 77 residues: U8-lycotoxin-Ls1h (77 aa).

The N-terminal stretch at M1 to V20 is a signal peptide. The propeptide occupies Q21–R26.

This sequence belongs to the neurotoxin 19 (CSTX) family. 08 (U8-Lctx) subfamily. Post-translationally, contains 4 disulfide bonds. Expressed by the venom gland.

It is found in the secreted. This is U8-lycotoxin-Ls1h from Lycosa singoriensis (Wolf spider).